We begin with the raw amino-acid sequence, 169 residues long: Photosystem I assembly protein Ycf3 (169 aa).

TPR repeat units lie at residues 35–68, 72–105, and 120–153; these read AFTY…EIDP, SYIL…NPSL, and GEQA…APNN.

This sequence belongs to the Ycf3 family.

It is found in the plastid. It localises to the chloroplast thylakoid membrane. Its function is as follows. Essential for the assembly of the photosystem I (PSI) complex. May act as a chaperone-like factor to guide the assembly of the PSI subunits. This chain is Photosystem I assembly protein Ycf3, found in Staurastrum punctulatum (Green alga).